Here is a 318-residue protein sequence, read N- to C-terminus: Galactofuranose-binding protein YtfQ (318 aa).

Positions 1–21 (MWKRLLIVSAVSAAMSSMALA) are cleaved as a signal peptide. Residues 34–38 (ESGWR), 111–112 (DR), R167, N220, and D248 contribute to the beta-D-galactofuranose site. A disulfide bridge connects residues C150 and C214.

Belongs to the bacterial solute-binding protein 2 family. The complex is composed of two ATP-binding proteins (YtfR), two transmembrane proteins (YtfT and YjfF) and a solute-binding protein (YtfQ).

The protein localises to the periplasm. Functionally, part of the ABC transporter complex YtfQRT-YjfF involved in galactofuranose transport. Binds to both alpha- and beta-galactofuranose. In Escherichia coli (strain K12), this protein is Galactofuranose-binding protein YtfQ (ytfQ).